We begin with the raw amino-acid sequence, 253 residues long: MSESPYTSGTTHFGFRDVAAKDKQKLVGEVFTSVARNYDLMNDLMSLGIHRAWKRYFVATAQVKPGDRVLDLAGGTGDIAVLLKERVGNEGAVVLGDINAGMLSVGRDRLTNRGLVAGFDYVQCNAEALPFPDQSFDLVTISFGLRNVTDKDAALREMYRVLKVGGQARVLEFSEVTADWFKPIYDFHSFKILPKLGQLFARDADSYQYLAESIRKHPPQDSLKGMMGEAGFARCHYKNLTGGIVAIHSGYKI.

S-adenosyl-L-methionine-binding positions include T76, D97, N125 to A126, and S142.

The protein belongs to the class I-like SAM-binding methyltransferase superfamily. MenG/UbiE family.

It carries out the reaction a 2-demethylmenaquinol + S-adenosyl-L-methionine = a menaquinol + S-adenosyl-L-homocysteine + H(+). It catalyses the reaction a 2-methoxy-6-(all-trans-polyprenyl)benzene-1,4-diol + S-adenosyl-L-methionine = a 5-methoxy-2-methyl-3-(all-trans-polyprenyl)benzene-1,4-diol + S-adenosyl-L-homocysteine + H(+). It participates in quinol/quinone metabolism; menaquinone biosynthesis; menaquinol from 1,4-dihydroxy-2-naphthoate: step 2/2. It functions in the pathway cofactor biosynthesis; ubiquinone biosynthesis. Methyltransferase required for the conversion of demethylmenaquinol (DMKH2) to menaquinol (MKH2) and the conversion of 2-polyprenyl-6-methoxy-1,4-benzoquinol (DDMQH2) to 2-polyprenyl-3-methyl-6-methoxy-1,4-benzoquinol (DMQH2). The chain is Ubiquinone/menaquinone biosynthesis C-methyltransferase UbiE from Xanthomonas campestris pv. campestris (strain ATCC 33913 / DSM 3586 / NCPPB 528 / LMG 568 / P 25).